Consider the following 398-residue polypeptide: Glycerol-3-phosphate dehydrogenase [NAD(+)] 1 (398 aa).

Residues G50–G55, F138, K161, and A194 each bind NAD(+). Residue K161 participates in substrate binding. K253 functions as the Proton acceptor in the catalytic mechanism. Positions 318 and 350 each coordinate NAD(+). R318 to N319 contributes to the substrate binding site.

The protein belongs to the NAD-dependent glycerol-3-phosphate dehydrogenase family.

Its subcellular location is the cytoplasm. It catalyses the reaction sn-glycerol 3-phosphate + NAD(+) = dihydroxyacetone phosphate + NADH + H(+). This is Glycerol-3-phosphate dehydrogenase [NAD(+)] 1 (GPD1) from Yarrowia lipolytica (strain CLIB 122 / E 150) (Yeast).